Reading from the N-terminus, the 382-residue chain is Intermediate transcription factor 3 large subunit (382 aa).

It belongs to the poxviruses A23 family. In terms of assembly, heterodimer of a 45 kDa and a 32 kDa subunit.

Functionally, acts with RNA polymerase to initiate transcription from intermediate gene promoters. This is Intermediate transcription factor 3 large subunit (VITF3L) from Oryctolagus cuniculus (Rabbit).